The sequence spans 161 residues: Allophycocyanin alpha chain 1 (161 aa).

Asparagine 71 bears the N4-methylasparagine mark. A (2R,3E)-phycocyanobilin-binding site is contributed by cysteine 81.

Belongs to the phycobiliprotein family. In terms of assembly, component of the phycobilisome. Heterodimer of an alpha and a beta chain. In terms of processing, contains one covalently linked bilin chromophore.

It localises to the cellular thylakoid membrane. Its function is as follows. Light-harvesting photosynthetic bile pigment-protein from the phycobiliprotein complex. Allophycocyanin has a maximum absorption at approximately 650 nanometers. The sequence is that of Allophycocyanin alpha chain 1 from Microchaete diplosiphon (Fremyella diplosiphon).